A 319-amino-acid chain; its full sequence is Histidinol-phosphate aminotransferase 1 (319 aa).

The residue at position 182 (lysine 182) is an N6-(pyridoxal phosphate)lysine.

The protein belongs to the class-II pyridoxal-phosphate-dependent aminotransferase family. Histidinol-phosphate aminotransferase subfamily. Requires pyridoxal 5'-phosphate as cofactor.

It carries out the reaction L-histidinol phosphate + 2-oxoglutarate = 3-(imidazol-4-yl)-2-oxopropyl phosphate + L-glutamate. Its pathway is amino-acid biosynthesis; L-histidine biosynthesis; L-histidine from 5-phospho-alpha-D-ribose 1-diphosphate: step 7/9. This Archaeoglobus fulgidus (strain ATCC 49558 / DSM 4304 / JCM 9628 / NBRC 100126 / VC-16) protein is Histidinol-phosphate aminotransferase 1 (hisC1).